Here is a 381-residue protein sequence, read N- to C-terminus: Chaperone protein DnaJ (381 aa).

The 66-residue stretch at 4-69 (DYYEILGVAR…EKRARYDQFG (66 aa)) folds into the J domain. A CR-type zinc finger spans residues 139-221 (GGEKELRVTR…CGGSGLVRKT (83 aa)). Zn(2+) contacts are provided by cysteine 152, cysteine 155, cysteine 169, cysteine 172, cysteine 195, cysteine 198, cysteine 209, and cysteine 212. CXXCXGXG motif repeat units follow at residues 152–159 (CGHCHGNG), 169–176 (CPTCQGRG), 195–202 (CSTCRGEG), and 209–216 (CRECGGSG).

Belongs to the DnaJ family. In terms of assembly, homodimer. It depends on Zn(2+) as a cofactor.

Its subcellular location is the cytoplasm. In terms of biological role, participates actively in the response to hyperosmotic and heat shock by preventing the aggregation of stress-denatured proteins and by disaggregating proteins, also in an autonomous, DnaK-independent fashion. Unfolded proteins bind initially to DnaJ; upon interaction with the DnaJ-bound protein, DnaK hydrolyzes its bound ATP, resulting in the formation of a stable complex. GrpE releases ADP from DnaK; ATP binding to DnaK triggers the release of the substrate protein, thus completing the reaction cycle. Several rounds of ATP-dependent interactions between DnaJ, DnaK and GrpE are required for fully efficient folding. Also involved, together with DnaK and GrpE, in the DNA replication of plasmids through activation of initiation proteins. The sequence is that of Chaperone protein DnaJ from Carboxydothermus hydrogenoformans (strain ATCC BAA-161 / DSM 6008 / Z-2901).